The following is a 337-amino-acid chain: Draxin (337 aa).

The signal sequence occupies residues 1 to 24; that stretch reads MLLLALLLLLELSLAGSLGPGSSA. 3 disordered regions span residues 36–67, 107–133, and 234–261; these read GPALWTPQASHHRRRGLGKKERGPGTPGWTQD, RPYPEKETQAPGSERVKKRGREHKRRK, and WPSTRKKEKHRGKLSSDGNETSPAKGEP. Composition is skewed to basic residues over residues 122–133 and 237–246; these read VKKRGREHKRRK and TRKKEKHRGK. An N-linked (GlcNAc...) asparagine glycan is attached at Asn252.

The protein belongs to the draxin family. In terms of assembly, interacts with LRP6.

It localises to the secreted. Its function is as follows. Chemorepulsive axon guidance protein required for the development of spinal cord and forebrain commissures. Acts as a chemorepulsive guidance protein for commissural axons during development. Able to inhibit or repel neurite outgrowth from dorsal spinal cord. Inhibits the stabilization of cytosolic beta-catenin (CTNNB1) via its interaction with LRP6, thereby acting as an antagonist of Wnt signaling pathway. The chain is Draxin from Bos taurus (Bovine).